Reading from the N-terminus, the 136-residue chain is uncharacterized protein (136 aa).

The next 2 membrane-spanning stretches (helical) occupy residues 36–56 and 63–83; these read FLLTNLVFLFVAFLILIIYLI and FAFAFIATIVFIIFYNILFLS.

Its subcellular location is the cell membrane. This is an uncharacterized protein from Mycoplasma pneumoniae (strain ATCC 29342 / M129 / Subtype 1) (Mycoplasmoides pneumoniae).